A 215-amino-acid polypeptide reads, in one-letter code: uncharacterized protein (215 aa).

It belongs to the HAD-like hydrolase superfamily. CbbY/CbbZ/Gph/YieH family.

This is an uncharacterized protein from Lacticaseibacillus casei (Lactobacillus casei).